Consider the following 306-residue polypeptide: 4-hydroxy-3-methylbut-2-enyl diphosphate reductase 1 (306 aa).

C10 is a binding site for [4Fe-4S] cluster. Residues H39 and H72 each coordinate (2E)-4-hydroxy-3-methylbut-2-enyl diphosphate. H39 and H72 together coordinate dimethylallyl diphosphate. Residues H39 and H72 each coordinate isopentenyl diphosphate. C94 serves as a coordination point for [4Fe-4S] cluster. H122 lines the (2E)-4-hydroxy-3-methylbut-2-enyl diphosphate pocket. Residue H122 participates in dimethylallyl diphosphate binding. H122 lines the isopentenyl diphosphate pocket. The Proton donor role is filled by E124. A (2E)-4-hydroxy-3-methylbut-2-enyl diphosphate-binding site is contributed by T162. Position 192 (C192) interacts with [4Fe-4S] cluster. Residues S220, S221, N222, and S264 each coordinate (2E)-4-hydroxy-3-methylbut-2-enyl diphosphate. Dimethylallyl diphosphate-binding residues include S220, S221, N222, and S264. Isopentenyl diphosphate is bound by residues S220, S221, N222, and S264.

Belongs to the IspH family. [4Fe-4S] cluster is required as a cofactor.

The enzyme catalyses isopentenyl diphosphate + 2 oxidized [2Fe-2S]-[ferredoxin] + H2O = (2E)-4-hydroxy-3-methylbut-2-enyl diphosphate + 2 reduced [2Fe-2S]-[ferredoxin] + 2 H(+). The catalysed reaction is dimethylallyl diphosphate + 2 oxidized [2Fe-2S]-[ferredoxin] + H2O = (2E)-4-hydroxy-3-methylbut-2-enyl diphosphate + 2 reduced [2Fe-2S]-[ferredoxin] + 2 H(+). Its pathway is isoprenoid biosynthesis; dimethylallyl diphosphate biosynthesis; dimethylallyl diphosphate from (2E)-4-hydroxy-3-methylbutenyl diphosphate: step 1/1. The protein operates within isoprenoid biosynthesis; isopentenyl diphosphate biosynthesis via DXP pathway; isopentenyl diphosphate from 1-deoxy-D-xylulose 5-phosphate: step 6/6. In terms of biological role, catalyzes the conversion of 1-hydroxy-2-methyl-2-(E)-butenyl 4-diphosphate (HMBPP) into a mixture of isopentenyl diphosphate (IPP) and dimethylallyl diphosphate (DMAPP). Acts in the terminal step of the DOXP/MEP pathway for isoprenoid precursor biosynthesis. The protein is 4-hydroxy-3-methylbut-2-enyl diphosphate reductase 1 of Rhodopseudomonas palustris (strain ATCC BAA-98 / CGA009).